Reading from the N-terminus, the 537-residue chain is Caspase recruitment domain-containing protein 8 (537 aa).

Over residues 1 to 23 (MEKKECPEKSSSSEEELPRRDSG) the composition is skewed to basic and acidic residues. Disordered regions lie at residues 1–28 (MEKK…SRNI) and 113–133 (GDIP…SGDI). The segment at 161 to 296 (FLGPEGNVDV…FYAVLESPSF (136 aa)) is ZU5. The FIIND domain maps to 161 to 446 (FLGPEGNVDV…LQLVAASAPP (286 aa)). The interval 297–446 (SLMGILLRIA…LQLVAASAPP (150 aa)) is UPA. The CARD domain occupies 446–536 (PPFSGAAFVK…YLVSYLRQQN (91 aa)).

Interacts with DPP9; leading to inhibit activation of the inflammasome. DPP9 acts via formation of a ternary complex, composed of a DPP9 homodimer, one full-length CARD8 protein, and one cleaved C-terminus of CARD8 (Caspase recruitment domain-containing protein 8, C-terminus). Interacts with DPP8; leading to inhibit activation of the inflammasome, probably via formation of a ternary complex with DPP8. Interacts with NLRP3. Interacts with IKBKG/NEMO. Interacts with DRAL. Binds to caspase-1 (CASP1), CARD16/pseudo-ICE and CARD18/ICEBERG. Interacts with NLRP2 (via NACHT domain). In terms of assembly, interacts with the C-terminal part of CARD8 (Caspase recruitment domain-containing protein 8, C-terminus) in absence of pathogens and other damage-associated signals. As to quaternary structure, interacts with the N-terminal part of CARD8 (Caspase recruitment domain-containing protein 8, N-terminus) in absence of pathogens and other damage-associated signals. Homomultimer; forms the CARD8 inflammasome polymeric complex, a filament composed of homopolymers of this form in response to pathogens and other damage-associated signals. The CARD8 inflammasome polymeric complex directly recruits pro-caspase-1 (proCASP1) independently of PYCARD/ASC. Interacts (via CARD domain) with CASP1 (via CARD domain); leading to CASP1 activation. Post-translationally, undergoes autocatalytic processing within the FIIND domain to generate the N-terminal and C-terminal parts, which are associated non-covalently in absence of pathogens and other damage-associated signals. Ubiquitinated by the N-end rule pathway in response to pathogens and other damage-associated signals, leading to its degradation by the proteasome and subsequent release of the cleaved C-terminal part of the protein (Caspase recruitment domain-containing protein 8, C-terminus), which polymerizes and forms the CARD8 inflammasome. In terms of processing, (Microbial infection) Proteolytic cleavage by HIV-1 protease in the disordered region and within the ZU5 region of the FIIND domain promotes ubiquitination of the N-terminal part by the N-end rule pathway and degradation by the proteasome, releasing the cleaved C-terminal part of the protein (Caspase recruitment domain-containing protein 8, C-terminus), which polymerizes and forms the CARD8 inflammasome. Post-translationally, undergoes less autocatalytic processing within the FIIND domain compared to isoform 5. As to expression, high expression in lung, ovary, testis and placenta. Lower expression in heart, kidney and liver. Also expressed in spleen, lymph node and bone marrow.

It localises to the cytoplasm. The protein resides in the nucleus. Its subcellular location is the inflammasome. Its activity is regulated as follows. CARD8 inflammasome is activated by HIV-1 protease activity: HIV-1 protease cleaves CARD8, promoting ubiquitination and degradation of the N-terminal part, releasing the cleaved C-terminal part of the protein (Caspase recruitment domain-containing protein 8, C-terminus), which polymerizes and forms the CARD8 inflammasome. CARD8 inflammasome is inhibited by DPP8 and DPP9, which sequester the C-terminal fragment of CARD8 (Caspase recruitment domain-containing protein 8, C-terminus) in a ternary complex, thereby preventing CARD8 oligomerization and activation. CARD8 inflammasome is activated by Val-boroPro (Talabostat, PT-100), an inhibitor of dipeptidyl peptidases DPP8 and DPP9. Val-boroPro relieves inhibition of DPP8 and/or DPP9 by inducing the proteasome-mediated destruction of the N-terminal part of CARD8, releasing its C-terminal part from autoinhibition. Indirectly activated by the pseudodipeptide CQ31. CQ31 directly inactivates the peptidases PEPD and XPNPEP1, leading to an accumulation of dipeptides that weaky inhibit DDP8 and DPP9, relieving DPP8- and/or DPP9-mediated inhibition of CARD8. In terms of biological role, inflammasome sensor, which mediates inflammasome activation in response to various pathogen-associated signals, leading to subsequent pyroptosis of CD4(+) T-cells and macrophages. Inflammasomes are supramolecular complexes that assemble in the cytosol in response to pathogens and other damage-associated signals and play critical roles in innate immunity and inflammation. Acts as a recognition receptor (PRR): recognizes specific pathogens and other damage-associated signals, such as HIV-1 protease activity or Val-boroPro inhibitor, and mediates CARD8 inflammasome activation. In response to pathogen-associated signals, the N-terminal part of CARD8 is degraded by the proteasome, releasing the cleaved C-terminal part of the protein (Caspase recruitment domain-containing protein 8, C-terminus), which polymerizes to initiate the formation of the inflammasome complex: the CARD8 inflammasome directly recruits pro-caspase-1 (proCASP1) independently of PYCARD/ASC and promotes caspase-1 (CASP1) activation, which subsequently cleaves and activates inflammatory cytokines IL1B and IL18 and gasdermin-D (GSDMD), leading to pyroptosis. Ability to sense HIV-1 protease activity leads to the clearance of latent HIV-1 in patient CD4(+) T-cells after viral reactivation; in contrast, HIV-1 can evade CARD8-sensing when its protease remains inactive in infected cells prior to viral budding. Also acts as a negative regulator of the NLRP3 inflammasome. May also act as an inhibitor of NF-kappa-B activation. Its function is as follows. Constitutes the precursor of the CARD8 inflammasome, which mediates autoproteolytic processing within the FIIND domain to generate the N-terminal and C-terminal parts, which are associated non-covalently in absence of pathogens and other damage-associated signals. Regulatory part that prevents formation of the CARD8 inflammasome: in absence of pathogens and other damage-associated signals, interacts with the C-terminal part of CARD8 (Caspase recruitment domain-containing protein 8, C-terminus), preventing activation of the CARD8 inflammasome. In response to pathogen-associated signals, this part is ubiquitinated by the N-end rule pathway and degraded by the proteasome, releasing the cleaved C-terminal part of the protein, which polymerizes and forms the CARD8 inflammasome. Functionally, constitutes the active part of the CARD8 inflammasome. In absence of pathogens and other damage-associated signals, interacts with the N-terminal part of CARD8 (Caspase recruitment domain-containing protein 8, N-terminus), preventing activation of the CARD8 inflammasome. In response to pathogen-associated signals, the N-terminal part of CARD8 is degraded by the proteasome, releasing this form, which polymerizes to form the CARD8 inflammasome complex: the CARD8 inflammasome complex then directly recruits pro-caspase-1 (proCASP1) and promotes caspase-1 (CASP1) activation, leading to gasdermin-D (GSDMD) cleavage and subsequent pyroptosis. This is Caspase recruitment domain-containing protein 8 from Homo sapiens (Human).